We begin with the raw amino-acid sequence, 568 residues long: Small ribosomal subunit protein bS1 (568 aa).

S1 motif domains follow at residues 27 to 93, 111 to 177, 198 to 266, 283 to 353, 370 to 440, and 459 to 530; these read GYVA…LSRE, GERV…VSRR, GQVV…LGMK, GKKI…LGLK, GTEV…LGIK, and NAVV…LSIK.

The protein belongs to the bacterial ribosomal protein bS1 family.

Binds mRNA; thus facilitating recognition of the initiation point. It is needed to translate mRNA with a short Shine-Dalgarno (SD) purine-rich sequence. In Rhizobium meliloti (strain 1021) (Ensifer meliloti), this protein is Small ribosomal subunit protein bS1 (rpsA).